A 76-amino-acid polypeptide reads, in one-letter code: Conotoxin Vc6.6 (76 aa).

An N-terminal signal peptide occupies residues 1–22; that stretch reads MKLTCMVIVAVLFLTANTFVTA. Residues 23–52 constitute a propeptide that is removed on maturation; it reads VPHSSNALENLYLKAHHEMNNPKDSELNKR. 3 disulfides stabilise this stretch: C53–C67, C60–C71, and C66–C75.

This sequence belongs to the conotoxin O1 superfamily. Expressed by the venom duct.

The protein resides in the secreted. The sequence is that of Conotoxin Vc6.6 from Conus victoriae (Queen Victoria cone).